A 430-amino-acid polypeptide reads, in one-letter code: Adenylosuccinate synthetase (430 aa).

Residues 12–18 (GDEGKGK) and 40–42 (GHT) contribute to the GTP site. The active-site Proton acceptor is D13. Mg(2+)-binding residues include D13 and G40. IMP contacts are provided by residues 13 to 16 (DEGK), 38 to 41 (NAGH), T130, R144, Q224, T239, and R303. H41 acts as the Proton donor in catalysis. 299 to 305 (VNTGRKR) is a substrate binding site. GTP-binding positions include R305, 331–333 (KLD), and 413–415 (STS).

It belongs to the adenylosuccinate synthetase family. Homodimer. Mg(2+) serves as cofactor.

The protein resides in the cytoplasm. The enzyme catalyses IMP + L-aspartate + GTP = N(6)-(1,2-dicarboxyethyl)-AMP + GDP + phosphate + 2 H(+). It participates in purine metabolism; AMP biosynthesis via de novo pathway; AMP from IMP: step 1/2. Its function is as follows. Plays an important role in the de novo pathway of purine nucleotide biosynthesis. Catalyzes the first committed step in the biosynthesis of AMP from IMP. This is Adenylosuccinate synthetase from Rhodopseudomonas palustris (strain TIE-1).